The sequence spans 244 residues: L-xylulose reductase (244 aa).

Methionine 1 carries the N-acetylmethionine modification. 11–39 (LVTGAGKGIGRSTVLALQAAGAHVVAVSR) is a binding site for NADP(+). Arginine 21 carries the omega-N-methylarginine modification. At serine 46 the chain carries Phosphoserine. Residue serine 136 coordinates substrate. Tyrosine 149 functions as the Proton acceptor in the catalytic mechanism. The active site involves lysine 153.

Belongs to the short-chain dehydrogenases/reductases (SDR) family. Homotetramer. As to expression, highly expressed in kidney and liver. Expressed in epididymis. Weakly expressed in brain, heart, lung, spleen and testis.

It localises to the membrane. The protein localises to the cytoplasmic vesicle. Its subcellular location is the secretory vesicle. The protein resides in the acrosome. It catalyses the reaction xylitol + NADP(+) = L-xylulose + NADPH + H(+). Functionally, catalyzes the NADPH-dependent reduction of several pentoses, tetroses, trioses, alpha-dicarbonyl compounds and L-xylulose. Participates in the uronate cycle of glucose metabolism. May play a role in the water absorption and cellular osmoregulation in the proximal renal tubules by producing xylitol, an osmolyte, thereby preventing osmolytic stress from occurring in the renal tubules. This Mesocricetus auratus (Golden hamster) protein is L-xylulose reductase (DCXR).